Reading from the N-terminus, the 157-residue chain is Transmembrane protein 50A (157 aa).

At Ser2 the chain carries N-acetylserine. Ser2 carries the post-translational modification Phosphoserine. A run of 4 helical transmembrane segments spans residues 26 to 46, 58 to 78, 95 to 115, and 126 to 146; these read IAAG…AVIY, ACGV…NGQV, IWLF…MWIL, and IVYP…GGLV.

This sequence belongs to the UPF0220 family.

It localises to the membrane. The polypeptide is Transmembrane protein 50A (TMEM50A) (Homo sapiens (Human)).